Here is a 409-residue protein sequence, read N- to C-terminus: Histidinol dehydrogenase homolog (409 aa).

Belongs to the histidinol dehydrogenase family.

This Synechocystis sp. (strain ATCC 27184 / PCC 6803 / Kazusa) protein is Histidinol dehydrogenase homolog.